The primary structure comprises 226 residues: Uracil-DNA glycosylase (226 aa).

The Proton acceptor role is filled by Asp-64.

Belongs to the uracil-DNA glycosylase (UDG) superfamily. UNG family.

The protein localises to the cytoplasm. It carries out the reaction Hydrolyzes single-stranded DNA or mismatched double-stranded DNA and polynucleotides, releasing free uracil.. In terms of biological role, excises uracil residues from the DNA which can arise as a result of misincorporation of dUMP residues by DNA polymerase or due to deamination of cytosine. The polypeptide is Uracil-DNA glycosylase (Vibrio vulnificus (strain CMCP6)).